The sequence spans 371 residues: Meiotic drive suppressor wtf18 (371 aa).

The next 8 helical transmembrane spans lie at 86 to 106, 120 to 140, 153 to 173, 197 to 217, 233 to 253, 257 to 277, 287 to 307, and 321 to 341; these read FLLRLLISVLAVSVVFFTAWV, AFSVTIGITCPILFIATFCFF, VTVIFLAQCVKVTVIFLAQCV, DLVVTIWLAWVVICFILFGCV, CSISAALFFILLLVCIPIWTL, LFGLFQVLGVQSCVVIVTKGL, ATGYEIEASSLFVIGNFLFFY, and FIGNGIASFLGGLGNAFGGIG.

Belongs to the WTF family. In terms of assembly, homomer. Interacts with other proteins that exhibit high sequence similarity.

It is found in the spore membrane. It localises to the vacuole membrane. Its function is as follows. Acts as a suppressor component of the dual wtf meiotic drive system, and can suppress but not confer meiotic drive by compatible poisons. Wtf meiotic drive systems promote unequal transmission of alleles from the parental zygote to progeny spores by encoding a poison and an antidote from the same locus; the poison is trans-acting and forms toxic aggregates in all spores within an ascus, wherease the antidote is spore-specific and targets aggregates for degradation by the vacuole. Meiotic drive by wtf systems therefore lead to poisoning of all progeny that do not inherit the dual poison/antidote allele, or express a compatible antidote. This chain is Meiotic drive suppressor wtf18, found in Schizosaccharomyces kambucha (Fission yeast).